The following is a 283-amino-acid chain: NAD kinase (283 aa).

Asp67 serves as the catalytic Proton acceptor. NAD(+) is bound by residues 67–68 (DG), 141–142 (ND), Arg152, Asp171, 182–187 (TAYSLS), and Gln241.

It belongs to the NAD kinase family. A divalent metal cation serves as cofactor.

The protein localises to the cytoplasm. It carries out the reaction NAD(+) + ATP = ADP + NADP(+) + H(+). In terms of biological role, involved in the regulation of the intracellular balance of NAD and NADP, and is a key enzyme in the biosynthesis of NADP. Catalyzes specifically the phosphorylation on 2'-hydroxyl of the adenosine moiety of NAD to yield NADP. The sequence is that of NAD kinase from Heliobacterium modesticaldum (strain ATCC 51547 / Ice1).